Reading from the N-terminus, the 414-residue chain is Multifunctional CCA protein (414 aa).

ATP contacts are provided by Gly-8 and Arg-11. Residues Gly-8 and Arg-11 each coordinate CTP. 2 residues coordinate Mg(2+): Asp-21 and Asp-23. Positions 91, 137, and 140 each coordinate ATP. 3 residues coordinate CTP: Arg-91, Arg-137, and Arg-140. Residues 226-327 (TGVHVMMVVD…VTLFERCDAF (102 aa)) enclose the HD domain.

The protein belongs to the tRNA nucleotidyltransferase/poly(A) polymerase family. Bacterial CCA-adding enzyme type 1 subfamily. In terms of assembly, monomer. Can also form homodimers and oligomers. Mg(2+) serves as cofactor. It depends on Ni(2+) as a cofactor.

It catalyses the reaction a tRNA precursor + 2 CTP + ATP = a tRNA with a 3' CCA end + 3 diphosphate. The catalysed reaction is a tRNA with a 3' CCA end + 2 CTP + ATP = a tRNA with a 3' CCACCA end + 3 diphosphate. Functionally, catalyzes the addition and repair of the essential 3'-terminal CCA sequence in tRNAs without using a nucleic acid template. Adds these three nucleotides in the order of C, C, and A to the tRNA nucleotide-73, using CTP and ATP as substrates and producing inorganic pyrophosphate. tRNA 3'-terminal CCA addition is required both for tRNA processing and repair. Also involved in tRNA surveillance by mediating tandem CCA addition to generate a CCACCA at the 3' terminus of unstable tRNAs. While stable tRNAs receive only 3'-terminal CCA, unstable tRNAs are marked with CCACCA and rapidly degraded. The polypeptide is Multifunctional CCA protein (Herminiimonas arsenicoxydans).